The primary structure comprises 275 residues: Lectin DB58 (275 aa).

The N-terminal stretch at 1 to 22 (MASSTVSVVLSLFLLLLTQAYS) is a signal peptide. N-linked (GlcNAc...) asparagine glycans are attached at residues Asn-34 and Asn-101.

The protein belongs to the leguminous lectin family. As to quaternary structure, heterodimer, composed of an alpha and a beta subunit derived from a single precursor. Post-translationally, leu-264 is missing in a major portion of the beta subunit, suggesting an origin by sequential removal of amino acids rather than a processing by endoproteolytic cleavage.

In terms of biological role, metalloglycoprotein, containing Ca, Mg, Mn, and Zn and the carbohydrates galactose, glucosamine, mannose, and fucose. It agglutinates erythrocytes of blood group A1. In Vigna unguiculata subsp. cylindrica (Horse gram), this protein is Lectin DB58.